A 465-amino-acid chain; its full sequence is Fusarisetin A cluster transcription factor fsa5 (465 aa).

Residues 13–47 (CDRCRSHKLKCTVAPENTRSGSSRCTRCIRAQVTC) constitute a DNA-binding region (zn(2)-C6 fungal-type). The interval 58-88 (STNVKKADLRSGTNGQETTSMQASTIVPGSP) is disordered. Over residues 68 to 84 (SGTNGQETTSMQASTIV) the composition is skewed to polar residues.

It is found in the nucleus. In terms of biological role, transcription activator that specifically regulates the expression of the gene cluster that mediates the biosynthesis of fusarisetin A. This is Fusarisetin A cluster transcription factor fsa5 from Fusarium sp. (strain FN080326).